Here is a 541-residue protein sequence, read N- to C-terminus: Nucleoporin NUP57 (541 aa).

A compositionally biased stretch (low complexity) spans 1-13 (MFGFSGSNNGFGN). Residues 1–261 (MFGFSGSNNG…STGSNLQQQQ (261 aa)) form a disordered region. 2 FG repeats span residues 2–3 (FG) and 11–12 (FG). Residues 19-36 (TGFSFGQNNNNTNTQPSA) are compositionally biased toward polar residues. FXFG repeat units follow at residues 21-24 (FSFG) and 39-42 (FGFG). FG repeat units lie at residues 56–57 (FG) and 65–66 (FG). A compositionally biased stretch (polar residues) spans 58 to 72 (ANQATNTFGSNQQSS). Residues 76–79 (GLFG) form a GLFG 1 repeat. A compositionally biased stretch (low complexity) spans 83 to 102 (ALGSLGSSSTTASGTTATGT). GLFG repeat units follow at residues 103 to 106 (GLFG), 120 to 123 (GLFG), 132 to 135 (GLFG), and 147 to 150 (GLFG). A compositionally biased stretch (polar residues) spans 105–116 (FGQQTAQPQQST). Polar residues predominate over residues 125 to 146 (KPTTTTGGLFGNSAQNNSTTSG). A compositionally biased stretch (polar residues) spans 153–172 (VGSTGSLMGGNSTQNTSNMN). GLFG repeat units lie at residues 175-178 (GLFG), 190-193 (GLFG), 204-207 (GLFG), and 220-223 (GLFG). Over residues 228–257 (PQTNTAPGLGNTVSTQPSFAWSKPSTGSNL) the composition is skewed to polar residues. Positions 398–425 (ILKAQSRNVEIEKRILKLGTQLATLKNR) form a coiled coil.

Belongs to the nucleoporin GLFG family. As to quaternary structure, component of the nuclear pore complex (NPC). NPC constitutes the exclusive means of nucleocytoplasmic transport. NPCs allow the passive diffusion of ions and small molecules and the active, nuclear transport receptor-mediated bidirectional transport of macromolecules such as proteins, RNAs, ribonucleoparticles (RNPs), and ribosomal subunits across the nuclear envelope. Due to its 8-fold rotational symmetry, all subunits are present with 8 copies or multiples thereof. NUP57 is part of the NUP57 subcomplex (NIC96, NSP1, NUP49, NUP57) interacting with NUP49 and NSP1. Interacts through its FG repeats with karyopherins.

Its subcellular location is the nucleus. The protein resides in the nuclear pore complex. The protein localises to the nucleus membrane. Its function is as follows. Functions as a component of the nuclear pore complex (NPC). NPC components, collectively referred to as nucleoporins (NUPs), can play the role of both NPC structural components and of docking or interaction partners for transiently associated nuclear transport factors. Active directional transport is assured by both, a Phe-Gly (FG) repeat affinity gradient for these transport factors across the NPC and a transport cofactor concentration gradient across the nuclear envelope (GSP1 and GSP2 GTPases associated predominantly with GTP in the nucleus, with GDP in the cytoplasm). NUP57 plays an important role in several nuclear transport pathways including poly(A)+ RNA, tRNA, and pre-ribosome transport. The protein is Nucleoporin NUP57 (NUP57) of Saccharomyces cerevisiae (strain ATCC 204508 / S288c) (Baker's yeast).